A 323-amino-acid polypeptide reads, in one-letter code: tRNA U34 carboxymethyltransferase (323 aa).

Carboxy-S-adenosyl-L-methionine-binding positions include K91, W105, K110, G130, 152 to 154 (DPT), 181 to 182 (IE), M196, Y200, and R315.

Belongs to the class I-like SAM-binding methyltransferase superfamily. CmoB family. As to quaternary structure, homotetramer.

The catalysed reaction is carboxy-S-adenosyl-L-methionine + 5-hydroxyuridine(34) in tRNA = 5-carboxymethoxyuridine(34) in tRNA + S-adenosyl-L-homocysteine + H(+). Functionally, catalyzes carboxymethyl transfer from carboxy-S-adenosyl-L-methionine (Cx-SAM) to 5-hydroxyuridine (ho5U) to form 5-carboxymethoxyuridine (cmo5U) at position 34 in tRNAs. This Escherichia coli (strain K12 / MC4100 / BW2952) protein is tRNA U34 carboxymethyltransferase.